The following is a 366-amino-acid chain: Nitronate monooxygenase (366 aa).

Residues asparagine 74, glutamine 181, glycine 186, glycine 223, and 242–245 (QLGT) each bind FMN.

This sequence belongs to the nitronate monooxygenase family. NMO class I subfamily. Requires FMN as cofactor.

The enzyme catalyses 3 propionate 3-nitronate + 3 O2 + H2O = 3 3-oxopropanoate + 2 nitrate + nitrite + H2O2 + 3 H(+). Its function is as follows. Nitronate monooxygenase that uses molecular oxygen to catalyze the oxidative denitrification of alkyl nitronates. Acts on propionate 3-nitronate (P3N), the presumed physiological substrate. Is likely involved in the degradation of P3N, that allows B.phytofirmans PsJN to grow on 3-nitropropionate/P3N as the sole source of nitrogen and carbon. Also probably functions in the detoxification of P3N, a metabolic poison produced by plants and fungi as a defense mechanism. Cannot oxidize nitroalkanes such as 3-nitropropionate, nitroethane, or 1-nitropropane. The chain is Nitronate monooxygenase from Paraburkholderia phytofirmans (strain DSM 17436 / LMG 22146 / PsJN) (Burkholderia phytofirmans).